An 84-amino-acid chain; its full sequence is Large ribosomal subunit protein bL27 (84 aa).

The tract at residues 1–21 is disordered; sequence MAHKKAGGSTRNGRDSESKRL.

This sequence belongs to the bacterial ribosomal protein bL27 family.

In Baumannia cicadellinicola subsp. Homalodisca coagulata, this protein is Large ribosomal subunit protein bL27.